The following is a 489-amino-acid chain: Serotonin-gated chloride channel mod-1 (489 aa).

The N-terminal stretch at 1–20 (MKFIPEITLLLLLFVHSTQA) is a signal peptide. Topologically, residues 21 to 240 (KGKRRKCPEG…VTFTFKRRYG (220 aa)) are extracellular. Asn44, Asn103, and Asn144 each carry an N-linked (GlcNAc...) asparagine glycan. Residues Tyr180 and Trp226 each coordinate serotonin. 3 consecutive transmembrane segments (helical) span residues 241 to 261 (FYIIQAYVPTYLTIIVSWVSF), 274 to 294 (VGISSLLALTFQFGNILKNLP), and 304 to 324 (VWMLGCISFVFGTMVELAFVC). The Cytoplasmic segment spans residues 325–458 (YISRCQNSVR…ARFHPEAVDK (134 aa)). The tract at residues 365 to 398 (GSVISHYHPTSNGNGNNNRHDTPQVTGRGSLHRN) is disordered. Over residues 372-391 (HPTSNGNGNNNRHDTPQVTG) the composition is skewed to polar residues. Residues 459–479 (FSIVAFPLAFTMFNLVYWWHY) traverse the membrane as a helical segment.

Belongs to the ligand-gated ion channel (TC 1.A.9) family. In terms of tissue distribution, expressed in a subset of muscles, and head and tail neurons, including RME and GABAergic ventral nerve cord neurons. Expressed in AIY, RME, RID, RIF, ASI, DD1-6, and PVN neurons.

The protein resides in the membrane. Its subcellular location is the cell membrane. Functions as a 5-hydroxytryptamine (serotonin) receptor. This receptor is a ligand-gated anion-specific ion channel, selective for chloride ions. Relays a long-range endocrine signal from the body cavity neurons to modulate distal adipose triglyceride lipase atgl-1 function, via the nuclear receptor nhr-76. Together with the G-protein coupled serotonin receptor ser-1 involved in male mating behavior. May mediate an inhibitory effect of serotonin on egg laying. Involved in regulating locomotory behavior, perhaps by modulating interneuronal signaling, acting in concert with G-protein coupled serotonin receptor ser-4. In the presence of food, plays a role in initiating and extending dwelling behavior, perhaps acting in AIY, RIF and ASI neurons, in opposition to neuropeptide PDF-mediated signaling. Plays a role in aversive learning upon exposure to pathogens such as Gram-negative bacterium P.aeruginosa strain PA14; perhaps acting in interneurons in response to serotonin released by the serotonergic ADF neurons. The polypeptide is Serotonin-gated chloride channel mod-1 (Caenorhabditis elegans).